The following is a 551-amino-acid chain: Formate--tetrahydrofolate ligase (551 aa).

Residue 65–72 participates in ATP binding; that stretch reads TPAGEGKT.

This sequence belongs to the formate--tetrahydrofolate ligase family.

The enzyme catalyses (6S)-5,6,7,8-tetrahydrofolate + formate + ATP = (6R)-10-formyltetrahydrofolate + ADP + phosphate. The protein operates within one-carbon metabolism; tetrahydrofolate interconversion. This chain is Formate--tetrahydrofolate ligase, found in Thermosipho africanus (strain TCF52B).